Reading from the N-terminus, the 164-residue chain is Transcriptional regulator MraZ (164 aa).

SpoVT-AbrB domains are found at residues 7 to 63 and 92 to 135; these read REQH…EPAV and LDQL…NPDR.

Belongs to the MraZ family. Forms oligomers.

Its subcellular location is the cytoplasm. The protein localises to the nucleoid. This chain is Transcriptional regulator MraZ, found in Chlorobaculum parvum (strain DSM 263 / NCIMB 8327) (Chlorobium vibrioforme subsp. thiosulfatophilum).